The chain runs to 185 residues: Ribosome-recycling factor (185 aa).

Belongs to the RRF family.

The protein localises to the cytoplasm. Its function is as follows. Responsible for the release of ribosomes from messenger RNA at the termination of protein biosynthesis. May increase the efficiency of translation by recycling ribosomes from one round of translation to another. This chain is Ribosome-recycling factor, found in Ehrlichia ruminantium (strain Welgevonden).